The primary structure comprises 181 residues: Ribosome-recycling factor (181 aa).

This sequence belongs to the RRF family.

The protein localises to the cytoplasm. In terms of biological role, responsible for the release of ribosomes from messenger RNA at the termination of protein biosynthesis. May increase the efficiency of translation by recycling ribosomes from one round of translation to another. In Tropheryma whipplei (strain TW08/27) (Whipple's bacillus), this protein is Ribosome-recycling factor.